A 247-amino-acid chain; its full sequence is Probable transcriptional regulatory protein Tola_2714 (247 aa).

The disordered stretch occupies residues 1–21 (MAGHSKWANIKHRKAAQDAKR).

Belongs to the TACO1 family.

It is found in the cytoplasm. This Tolumonas auensis (strain DSM 9187 / NBRC 110442 / TA 4) protein is Probable transcriptional regulatory protein Tola_2714.